Here is a 114-residue protein sequence, read N- to C-terminus: MNSYLLLLMVSLLTCIGQLCQKQAAQCWEQPQARRLNLTLRWLAIAVVSLGLGMLLWLRLLQQLPLSVAYPMLSFNFVLVTLAAQLFYGEKATLRHWLGVAAIMFGILLMSWHL.

Helical transmembrane passes span 38–58 (LTLRWLAIAVVSLGLGMLLWL), 64–84 (LPLSVAYPMLSFNFVLVTLAA), and 94–114 (LRHWLGVAAIMFGILLMSWHL). The region spanning 43–112 (LAIAVVSLGL…IMFGILLMSW (70 aa)) is the EamA domain.

This sequence belongs to the ArnE family. In terms of assembly, heterodimer of ArnE and ArnF.

Its subcellular location is the cell inner membrane. The protein operates within bacterial outer membrane biogenesis; lipopolysaccharide biosynthesis. Its function is as follows. Translocates 4-amino-4-deoxy-L-arabinose-phosphoundecaprenol (alpha-L-Ara4N-phosphoundecaprenol) from the cytoplasmic to the periplasmic side of the inner membrane. The chain is Probable 4-amino-4-deoxy-L-arabinose-phosphoundecaprenol flippase subunit ArnE from Yersinia pestis bv. Antiqua (strain Antiqua).